Consider the following 191-residue polypeptide: Molybdenum cofactor guanylyltransferase (191 aa).

GTP-binding positions include 11–13, Lys-23, Asp-66, and Asp-97; that span reads LCG. Asp-97 serves as a coordination point for Mg(2+).

The protein belongs to the MobA family. As to quaternary structure, monomer. Mg(2+) serves as cofactor.

It localises to the cytoplasm. The catalysed reaction is Mo-molybdopterin + GTP + H(+) = Mo-molybdopterin guanine dinucleotide + diphosphate. Its function is as follows. Transfers a GMP moiety from GTP to Mo-molybdopterin (Mo-MPT) cofactor (Moco or molybdenum cofactor) to form Mo-molybdopterin guanine dinucleotide (Mo-MGD) cofactor. This Campylobacter jejuni subsp. doylei (strain ATCC BAA-1458 / RM4099 / 269.97) protein is Molybdenum cofactor guanylyltransferase.